We begin with the raw amino-acid sequence, 541 residues long: Presenilin homolog (541 aa).

2 stretches are compositionally biased toward polar residues: residues 1-14 and 43-52; these read MAAV…SSGL and NNYGSSNQDQ. Disordered regions lie at residues 1–52 and 69–92; these read MAAV…NQDQ and CGSR…NEME. Topologically, residues 1–106 are cytoplasmic; sequence MAAVNLQASC…LKYGAQHVIK (106 aa). The chain crosses the membrane as a helical span at residues 107–127; it reads LFVPVSLCMLVVVATINSISF. At 128–154 the chain is on the lumenal side; that stretch reads YNSTDVYLLYTPFHEQSPEPSVKFWSA. N-linked (GlcNAc...) asparagine glycosylation is present at asparagine 129. A helical transmembrane segment spans residues 155 to 175; the sequence is LANSLILMSVVVVMTFLLIVL. The Cytoplasmic portion of the chain corresponds to 176-182; it reads YKKRCYR. A helical transmembrane segment spans residues 183 to 203; the sequence is IIHGWLILSSFMLLFIFTYLY. At 204-216 the chain is on the lumenal side; the sequence is LEELLRAYNIPMD. Residues 217–237 traverse the membrane as a helical segment; sequence YPTALLIMWNFGVVGMMSIHW. The Cytoplasmic segment spans residues 238–242; that stretch reads QGPLR. The helical transmembrane segment at 243–263 threads the bilayer; the sequence is LQQGYLIFVAALMALVFIKYL. Residues 264 to 265 lie on the Lumenal side of the membrane; it reads PE. The helical transmembrane segment at 266–286 threads the bilayer; it reads WTAWAVLAAISIWDLIAVLSP. Aspartate 279 is an active-site residue. Over 287–453 the chain is Cytoplasmic; sequence RGPLRILVET…QNHPDGQEER (167 aa). Positions 320 to 481 are interaction with Mettl2; it reads NTVTPQQSQA…ASSYGDWTTT (162 aa). Low complexity predominate over residues 327–350; that stretch reads SQATASSSPSSSNSTTTTRATQNS. Disordered stretches follow at residues 327 to 379 and 421 to 449; these read SQAT…DGSV and EVQS…HPDG. 2 stretches are compositionally biased toward polar residues: residues 361-370 and 421-443; these read GQRTGNSHPR and EVQS…TAPD. A helical membrane pass occupies residues 454 to 474; that stretch reads GIKLGLGDFIFYSVLVGKASS. Aspartate 461 is a catalytic residue. Residues 475–481 are Lumenal-facing; the sequence is YGDWTTT. Residues 482-502 form a helical membrane-spanning segment; the sequence is IACFVAILIGLCLTLLLLAIW. At 503-506 the chain is on the cytoplasmic side; sequence RKAL. The short motif at 507–509 is the PAL element; it reads PAL. The segment at residues 507-527 is an intramembrane region (helical); that stretch reads PALPISITFGLIFCFATSAVV. Residues 528–541 lie on the Cytoplasmic side of the membrane; that stretch reads KPFMEDLSAKQVFI.

It belongs to the peptidase A22A family. Homodimer. Component of the gamma-secretase complex, a complex composed of a presenilin (Psn) homodimer, nicastrin (Nct), Aph-1 and Pen-2. Interacts with Mettl2. Isoform 2 shows a better interaction with Mettl2 than isoform 1. In terms of processing, cleaved. The cleavage, which probably takes place between the 6th and the 7th transmembrane regions, may be required for activation of the gamma-secretase activity. Maternally expressed in nurse and follicle cells. In early embryos, expressed in all or most cells and later increases in CNS and epidermal tissues. In larvae, expression is seen in all imaginal disks, brain and optic lobes. In pupae, expression is seen in eye disk and brain.

It localises to the endoplasmic reticulum membrane. The protein resides in the golgi apparatus membrane. Probable catalytic subunit of the gamma-secretase complex, an endoprotease complex that catalyzes the intramembrane cleavage of integral membrane proteins such as Notch receptor. Required for S3 cleavage of Notch, which releases activated Notch protein from the cell membrane. Involved in the patterning of the optic lobes. The protein is Presenilin homolog (Psn) of Drosophila melanogaster (Fruit fly).